We begin with the raw amino-acid sequence, 535 residues long: CTP synthase (535 aa).

Positions 1–267 (MTKYIFVTGG…DQIVCDHLKL (267 aa)) are amidoligase domain. Ser-13 contributes to the CTP binding site. Residue Ser-13 coordinates UTP. 14–19 (SLGKGI) contributes to the ATP binding site. L-glutamine is bound at residue Tyr-54. An ATP-binding site is contributed by Asp-71. Positions 71 and 141 each coordinate Mg(2+). Residues 148–150 (DIE), 188–193 (KTKPTQ), and Lys-224 contribute to the CTP site. UTP-binding positions include 188-193 (KTKPTQ) and Lys-224. Residue 240–242 (RDA) coordinates ATP. Positions 292-534 (KIALVGKYVE…VRASITNKES (243 aa)) constitute a Glutamine amidotransferase type-1 domain. Gly-354 is a binding site for L-glutamine. Catalysis depends on Cys-381, which acts as the Nucleophile; for glutamine hydrolysis. L-glutamine is bound by residues 382–385 (LGMQ), Glu-405, and Arg-462. Catalysis depends on residues His-507 and Glu-509.

The protein belongs to the CTP synthase family. In terms of assembly, homotetramer.

It catalyses the reaction UTP + L-glutamine + ATP + H2O = CTP + L-glutamate + ADP + phosphate + 2 H(+). It carries out the reaction L-glutamine + H2O = L-glutamate + NH4(+). The catalysed reaction is UTP + NH4(+) + ATP = CTP + ADP + phosphate + 2 H(+). It participates in pyrimidine metabolism; CTP biosynthesis via de novo pathway; CTP from UDP: step 2/2. Its activity is regulated as follows. Allosterically activated by GTP, when glutamine is the substrate; GTP has no effect on the reaction when ammonia is the substrate. The allosteric effector GTP functions by stabilizing the protein conformation that binds the tetrahedral intermediate(s) formed during glutamine hydrolysis. Inhibited by the product CTP, via allosteric rather than competitive inhibition. Catalyzes the ATP-dependent amination of UTP to CTP with either L-glutamine or ammonia as the source of nitrogen. Regulates intracellular CTP levels through interactions with the four ribonucleotide triphosphates. The polypeptide is CTP synthase (Bacillus cereus (strain AH187)).